A 1034-amino-acid polypeptide reads, in one-letter code: Glycine dehydrogenase (decarboxylating), mitochondrial (1034 aa).

The transit peptide at 1-63 (MERARRLAML…LNGFGSQVRT (63 aa)) directs the protein to the mitochondrion. Residue Lys770 is modified to N6-(pyridoxal phosphate)lysine.

The protein belongs to the GcvP family. In terms of assembly, homodimer. The glycine cleavage system is composed of four proteins: P, T, L and H. Requires pyridoxal 5'-phosphate as cofactor.

The protein resides in the mitochondrion. It carries out the reaction N(6)-[(R)-lipoyl]-L-lysyl-[glycine-cleavage complex H protein] + glycine + H(+) = N(6)-[(R)-S(8)-aminomethyldihydrolipoyl]-L-lysyl-[glycine-cleavage complex H protein] + CO2. The glycine cleavage system catalyzes the degradation of glycine. The P protein binds the alpha-amino group of glycine through its pyridoxal phosphate cofactor; CO(2) is released and the remaining methylamine moiety is then transferred to the lipoamide cofactor of the H protein. The sequence is that of Glycine dehydrogenase (decarboxylating), mitochondrial (GDCSP) from Flaveria anomala (Yellowtops).